We begin with the raw amino-acid sequence, 197 residues long: MSNSFSLIPLPLVDQRYAQALFDLAQEEGLVEILEKAVESFLMVLDQDEDLKHFVQSPFFSVKEQVKVMHSVCENIPFADEGAGQILSRFLRVITLNHRLRALSGILHAFQRRVALSRREFSAQIIAARPLNSQQEQQLQSVLESVVGGKVFLNICVDPEILGGLIIRLGSSQIDTSLMAKLSSLKIALKKRSADGY.

This sequence belongs to the ATPase delta chain family. In terms of assembly, F-type ATPases have 2 components, F(1) - the catalytic core - and F(0) - the membrane proton channel. F(1) has five subunits: alpha(3), beta(3), gamma(1), delta(1), epsilon(1). F(0) has three main subunits: a(1), b(2) and c(10-14). The alpha and beta chains form an alternating ring which encloses part of the gamma chain. F(1) is attached to F(0) by a central stalk formed by the gamma and epsilon chains, while a peripheral stalk is formed by the delta and b chains.

Its subcellular location is the cell inner membrane. In terms of biological role, f(1)F(0) ATP synthase produces ATP from ADP in the presence of a proton or sodium gradient. F-type ATPases consist of two structural domains, F(1) containing the extramembraneous catalytic core and F(0) containing the membrane proton channel, linked together by a central stalk and a peripheral stalk. During catalysis, ATP synthesis in the catalytic domain of F(1) is coupled via a rotary mechanism of the central stalk subunits to proton translocation. Functionally, this protein is part of the stalk that links CF(0) to CF(1). It either transmits conformational changes from CF(0) to CF(1) or is implicated in proton conduction. The sequence is that of ATP synthase subunit delta from Bartonella henselae (strain ATCC 49882 / DSM 28221 / CCUG 30454 / Houston 1) (Rochalimaea henselae).